A 562-amino-acid chain; its full sequence is Cytosolic Fe-S cluster assembly factor nar1 (562 aa).

Cys20 serves as a coordination point for [4Fe-4S] cluster. The disordered stretch occupies residues 28-47 (PKNESSNSQNPYEVTTEDKV). Residues 29 to 40 (KNESSNSQNPYE) show a composition bias toward polar residues. 5 residues coordinate [4Fe-4S] cluster: Cys62, Cys65, Cys68, Cys214, and Cys269. Residues 439 to 462 (ARVPAASAGGNRRQPISRNSASAG) form a disordered region. Residues 452–462 (QPISRNSASAG) are compositionally biased toward polar residues. 2 residues coordinate [4Fe-4S] cluster: Cys475 and Cys479. 2 disordered regions span residues 492 to 513 (REAS…PTPH) and 541 to 562 (HSPS…IGLT). Residues 494-505 (ASTSTQSVTAVE) are compositionally biased toward polar residues.

Belongs to the NARF family.

Functionally, component of the cytosolic Fe/S protein assembly machinery. Required for maturation of extramitochondrial Fe/S proteins. May play a role in the transfer of pre-assembled Fe/S clusters to target apoproteins. The polypeptide is Cytosolic Fe-S cluster assembly factor nar1 (nar1) (Aspergillus flavus (strain ATCC 200026 / FGSC A1120 / IAM 13836 / NRRL 3357 / JCM 12722 / SRRC 167)).